The primary structure comprises 258 residues: Chaperone protein caf1M (258 aa).

The first 20 residues, 1–20 (MILNRLSTLGIITFGMLSFA), serve as a signal peptide directing secretion. A disulfide bond links cysteine 121 and cysteine 160.

This sequence belongs to the periplasmic pilus chaperone family.

The protein localises to the periplasm. Its function is as follows. Has a stimulatory role for the envelope antigen F1 secretion. It seems to interact with the subunit polypeptide and to prevent it from digestion by a protease. This Yersinia pestis protein is Chaperone protein caf1M (caf1M).